We begin with the raw amino-acid sequence, 274 residues long: Nitrogenase iron protein (274 aa).

ATP is bound at residue 8–15; it reads GKGGIGKS. Cys-94 is a binding site for [4Fe-4S] cluster. At Arg-97 the chain carries ADP-ribosylarginine; by dinitrogenase reductase ADP-ribosyltransferase. Cys-131 provides a ligand contact to [4Fe-4S] cluster.

This sequence belongs to the NifH/BchL/ChlL family. As to quaternary structure, homodimer. Requires [4Fe-4S] cluster as cofactor. The reversible ADP-ribosylation of Arg-97 inactivates the nitrogenase reductase and regulates nitrogenase activity.

It catalyses the reaction N2 + 8 reduced [2Fe-2S]-[ferredoxin] + 16 ATP + 16 H2O = H2 + 8 oxidized [2Fe-2S]-[ferredoxin] + 2 NH4(+) + 16 ADP + 16 phosphate + 6 H(+). In terms of biological role, the key enzymatic reactions in nitrogen fixation are catalyzed by the nitrogenase complex, which has 2 components: the iron protein and the molybdenum-iron protein. The protein is Nitrogenase iron protein of Desulfatibacillum aliphaticivorans.